The chain runs to 134 residues: Small ribosomal subunit protein uS11 (134 aa).

This sequence belongs to the universal ribosomal protein uS11 family. As to quaternary structure, part of the 30S ribosomal subunit. Interacts with proteins S7 and S18. Binds to IF-3.

In terms of biological role, located on the platform of the 30S subunit, it bridges several disparate RNA helices of the 16S rRNA. Forms part of the Shine-Dalgarno cleft in the 70S ribosome. The sequence is that of Small ribosomal subunit protein uS11 from Micrococcus luteus (strain ATCC 4698 / DSM 20030 / JCM 1464 / CCM 169 / CCUG 5858 / IAM 1056 / NBRC 3333 / NCIMB 9278 / NCTC 2665 / VKM Ac-2230) (Micrococcus lysodeikticus).